The chain runs to 279 residues: NADPH-dependent 7-cyano-7-deazaguanine reductase (279 aa).

I86–S88 provides a ligand contact to substrate. S88–K89 provides a ligand contact to NADPH. C187 (thioimide intermediate) is an active-site residue. The active-site Proton donor is D194. Residue H226–E227 coordinates substrate. Residue R255–G256 participates in NADPH binding.

This sequence belongs to the GTP cyclohydrolase I family. QueF type 2 subfamily. Homodimer.

Its subcellular location is the cytoplasm. The catalysed reaction is 7-aminomethyl-7-carbaguanine + 2 NADP(+) = 7-cyano-7-deazaguanine + 2 NADPH + 3 H(+). Its pathway is tRNA modification; tRNA-queuosine biosynthesis. Functionally, catalyzes the NADPH-dependent reduction of 7-cyano-7-deazaguanine (preQ0) to 7-aminomethyl-7-deazaguanine (preQ1). The polypeptide is NADPH-dependent 7-cyano-7-deazaguanine reductase (Haemophilus influenzae (strain PittEE)).